A 195-amino-acid chain; its full sequence is Peptidyl-tRNA hydrolase (195 aa).

TRNA is bound at residue tyrosine 17. The active-site Proton acceptor is histidine 22. TRNA contacts are provided by phenylalanine 68, asparagine 70, and asparagine 116.

This sequence belongs to the PTH family. Monomer.

The protein localises to the cytoplasm. It carries out the reaction an N-acyl-L-alpha-aminoacyl-tRNA + H2O = an N-acyl-L-amino acid + a tRNA + H(+). In terms of biological role, hydrolyzes ribosome-free peptidyl-tRNAs (with 1 or more amino acids incorporated), which drop off the ribosome during protein synthesis, or as a result of ribosome stalling. Its function is as follows. Catalyzes the release of premature peptidyl moieties from peptidyl-tRNA molecules trapped in stalled 50S ribosomal subunits, and thus maintains levels of free tRNAs and 50S ribosomes. The polypeptide is Peptidyl-tRNA hydrolase (Shewanella loihica (strain ATCC BAA-1088 / PV-4)).